The sequence spans 257 residues: Pyridoxal phosphate homeostasis protein (257 aa).

S2 is modified (N-acetylserine). K49 is subject to N6-(pyridoxal phosphate)lysine.

This sequence belongs to the pyridoxal phosphate-binding protein YggS/PROSC family.

It is found in the cytoplasm. The protein resides in the nucleus. Its function is as follows. Pyridoxal 5'-phosphate (PLP)-binding protein, which may be involved in intracellular homeostatic regulation of pyridoxal 5'-phosphate (PLP), the active form of vitamin B6. In Saccharomyces cerevisiae (strain ATCC 204508 / S288c) (Baker's yeast), this protein is Pyridoxal phosphate homeostasis protein.